We begin with the raw amino-acid sequence, 380 residues long: Variant-surface-glycoprotein phospholipase C (380 aa).

One can recognise a PI-PLC X-box domain in the interval 31-205; the sequence is ITQVCFVGSH…SRRRIFLVVG (175 aa).

In terms of assembly, monomer.

Its subcellular location is the membrane. It catalyses the reaction a 6-(alpha-D-glucosaminyl)-1-(1,2-diacyl-sn-glycero-3-phospho)-1D-myo-inositol = 6-(alpha-D-glucosaminyl)-1D-myo-inositol 1,2-cyclic phosphate + a 1,2-diacyl-sn-glycerol. Functionally, by hydrolysis of the attached glycolipid, releases soluble variant surface glycoprotein containing phosphoinositol from the cell wall of T.brucei after cell lysis. It also cleaves similar membrane anchors on some mammalian proteins. VSG lipase may play a role in processes such as parasite differentiation or antigenic variation. The sequence is that of Variant-surface-glycoprotein phospholipase C from Trypanosoma cruzi.